The primary structure comprises 448 residues: N-succinylarginine dihydrolase (448 aa).

Residues A19–S28, N110, and H137–R138 contribute to the substrate site. E174 is an active-site residue. Residue R214 coordinates substrate. Residue H250 is part of the active site. The substrate site is built by D252 and N364. Catalysis depends on C370, which acts as the Nucleophile.

This sequence belongs to the succinylarginine dihydrolase family. In terms of assembly, homodimer.

It catalyses the reaction N(2)-succinyl-L-arginine + 2 H2O + 2 H(+) = N(2)-succinyl-L-ornithine + 2 NH4(+) + CO2. The protein operates within amino-acid degradation; L-arginine degradation via AST pathway; L-glutamate and succinate from L-arginine: step 2/5. Its function is as follows. Catalyzes the hydrolysis of N(2)-succinylarginine into N(2)-succinylornithine, ammonia and CO(2). This chain is N-succinylarginine dihydrolase, found in Pseudoalteromonas translucida (strain TAC 125).